Here is a 296-residue protein sequence, read N- to C-terminus: Small ribosomal subunit protein uS2 (296 aa).

The segment at T252 to T296 is disordered.

This sequence belongs to the universal ribosomal protein uS2 family.

The protein is Small ribosomal subunit protein uS2 (rpsB) of Rickettsia prowazekii (strain Madrid E).